The primary structure comprises 196 residues: Imidazole glycerol phosphate synthase subunit HisH (196 aa).

The Glutamine amidotransferase type-1 domain maps to 2-196; that stretch reads KVAVVKYNAG…ERVLRNFLDL (195 aa). Cysteine 77 (nucleophile) is an active-site residue. Residues histidine 178 and glutamate 180 contribute to the active site.

Heterodimer of HisH and HisF.

Its subcellular location is the cytoplasm. It catalyses the reaction 5-[(5-phospho-1-deoxy-D-ribulos-1-ylimino)methylamino]-1-(5-phospho-beta-D-ribosyl)imidazole-4-carboxamide + L-glutamine = D-erythro-1-(imidazol-4-yl)glycerol 3-phosphate + 5-amino-1-(5-phospho-beta-D-ribosyl)imidazole-4-carboxamide + L-glutamate + H(+). The enzyme catalyses L-glutamine + H2O = L-glutamate + NH4(+). It participates in amino-acid biosynthesis; L-histidine biosynthesis; L-histidine from 5-phospho-alpha-D-ribose 1-diphosphate: step 5/9. Functionally, IGPS catalyzes the conversion of PRFAR and glutamine to IGP, AICAR and glutamate. The HisH subunit catalyzes the hydrolysis of glutamine to glutamate and ammonia as part of the synthesis of IGP and AICAR. The resulting ammonia molecule is channeled to the active site of HisF. The chain is Imidazole glycerol phosphate synthase subunit HisH from Bacteroides thetaiotaomicron (strain ATCC 29148 / DSM 2079 / JCM 5827 / CCUG 10774 / NCTC 10582 / VPI-5482 / E50).